The primary structure comprises 206 residues: MNGVRDPPLFIKDIKPGLKNLNVVFIVLEIGRVTKTKDGHEVRSCKVADKTGSITISVWDEIGGLIQPGDIIRLTRGYASMWKGCLTLYTGRGGELQKIGEFCMVYSELPNFSEPNPDYRGQQNKGAHNEQKNNSMNNSNNVGTGTFGPMGNGVQTGAEARGCQFSYAGRSNGRGPINPQLPGTANNQTVMTTISNGRDPRRAFKR.

Positions 26–89 form a DNA-binding region, OB; sequence IVLEIGRVTK…SMWKGCLTLY (64 aa). Disordered regions lie at residues 114–146 and 166–206; these read EPNPDYRGQQNKGAHNEQKNNSMNNSNNVGTGT and SYAG…AFKR. Over residues 181-196 the composition is skewed to polar residues; sequence LPGTANNQTVMTTISN.

This sequence belongs to the SOSS-B family. SOSS-B2 subfamily. As to quaternary structure, component of the SOSS complex, composed of SOSS-B (SOSS-B1/NABP2 or SOSS-B2/NABP1), SOSS-A/INTS3 and SOSS-C/INIP. SOSS complexes containing SOSS-B1/NABP2 are more abundant than complexes containing SOSS-B2/NABP1.

The protein localises to the nucleus. Functionally, component of the SOSS complex, a multiprotein complex that functions downstream of the MRN complex to promote DNA repair and G2/M checkpoint. In the SOSS complex, acts as a sensor of single-stranded DNA that binds to single-stranded DNA, in particular to polypyrimidines. The SOSS complex associates with DNA lesions and influences diverse endpoints in the cellular DNA damage response including cell-cycle checkpoint activation, recombinational repair and maintenance of genomic stability. Required for efficient homologous recombination-dependent repair of double-strand breaks (DSBs) and ATM-dependent signaling pathways. The sequence is that of SOSS complex subunit B2 (NABP1) from Bos taurus (Bovine).